Consider the following 776-residue polypeptide: Microtubule-associated protein tau (776 aa).

The span at 1–26 shows a compositional bias: basic and acidic residues; it reads MAEPRQEFEVMEDHAGTYGLGDRKDQ. Disordered stretches follow at residues 1-263 and 276-591; these read MAEP…PAKG and STEI…LKNV. Alanine 2 is subject to N-acetylalanine. 2 positions are modified to phosphotyrosine: tyrosine 18 and tyrosine 29. Lysine 44 participates in a covalent cross-link: Glycyl lysine isopeptide (Lys-Gly) (interchain with G-Cter in ubiquitin). Phosphoserine is present on residues serine 46 and serine 61. The span at 61–71 shows a compositional bias: polar residues; sequence SETSDAKSTPT. Residues threonine 69, threonine 71, and threonine 111 each carry the phosphothreonine modification. Basic and acidic residues-rich tracts occupy residues 179-189 and 207-216; these read EGGRHAPELLK and GGKERPGSKE. Position 214 is a phosphoserine (serine 214). Over residues 217–228 the composition is skewed to acidic residues; that stretch reads EVDEDRDVDESS. The span at 314-323 shows a compositional bias: basic and acidic residues; that stretch reads EQAHSEEHLG. Positions 324–340 are enriched in low complexity; that stretch reads RAAFPGAPGEGPEARGP. Composition is skewed to basic and acidic residues over residues 344–356 and 381–393; these read EDTK…ESSE and KSKD…DKKA. Residues 440–452 show a composition bias toward polar residues; that stretch reads KYVSSVTPRTGSS. The segment covering 455-466 has biased composition (basic and acidic residues); sequence KEMKLKGADGKT. At threonine 470 the chain carries Phosphothreonine. Residue arginine 472 is modified to Omega-N-methylarginine. An N6,N6-dimethyllysine; alternate modification is found at lysine 480. Lysine 480 bears the N6-acetyllysine; alternate mark. Phosphothreonine occurs at positions 486, 492, and 498. 3 positions are modified to phosphoserine: serine 502, serine 526, and serine 530. Residues 517-528 show a composition bias toward basic and acidic residues; it reads RSERGEPPKSGD. The span at 529-549 shows a compositional bias: low complexity; sequence RSGYSSPGSPGTPGSRSRTPS. A Phosphotyrosine modification is found at tyrosine 532. Phosphoserine occurs at positions 533, 534, and 537. Threonine 540 and threonine 547 each carry phosphothreonine. A Phosphoserine modification is found at serine 549. Residue threonine 552 is modified to Phosphothreonine. Residue lysine 560 is modified to N6-acetyllysine. Threonine 566 is subject to Phosphothreonine. Phosphoserine is present on residues serine 570 and serine 572. Tau/MAP repeat units lie at residues 579 to 609, 610 to 640, 641 to 671, and 672 to 703; these read QTAP…GGGK, VQII…GGGS, VQIV…GGGQ, and VEVK…GGGN. Lysine 589 is covalently cross-linked (Glycyl lysine isopeptide (Lys-Gly) (interchain with G-Cter in ubiquitin)). The residue at position 594 (lysine 594) is an N6-acetyllysine; alternate. Lysine 594 carries the N6-methyllysine; alternate modification. Residue lysine 594 forms a Glycyl lysine isopeptide (Lys-Gly) (interchain with G-Cter in ubiquitin); alternate linkage. At serine 597 the chain carries Phosphoserine. Lysine 602 is covalently cross-linked (Glycyl lysine isopeptide (Lys-Gly) (interchain with G-Cter in ubiquitin)). Lysine 616 bears the N6-acetyllysine; alternate mark. Residue lysine 616 forms a Glycyl lysine isopeptide (Lys-Gly) (interchain with G-Cter in ubiquitin); alternate linkage. 2 positions are modified to phosphoserine: serine 620 and serine 624. At lysine 625 the chain carries N6-acetyllysine. Serine 628 carries the post-translational modification Phosphoserine. Lysine 633 bears the N6-acetyllysine; alternate mark. Lysine 633 is covalently cross-linked (Glycyl lysine isopeptide (Lys-Gly) (interchain with G-Cter in ubiquitin); alternate). A Phosphoserine modification is found at serine 640. Lysine 646 bears the N6,N6-dimethyllysine; alternate mark. Residues lysine 646, lysine 652, and lysine 656 each carry the N6-acetyllysine; alternate modification. Glycyl lysine isopeptide (Lys-Gly) (interchain with G-Cter in ubiquitin); alternate cross-links involve residues lysine 646, lysine 652, and lysine 656. Serine 659 bears the Phosphoserine mark. Lysine 666, lysine 678, and lysine 682 each carry N6-acetyllysine; alternate. Glycyl lysine isopeptide (Lys-Gly) (interchain with G-Cter in ubiquitin); alternate cross-links involve residues lysine 666, lysine 678, and lysine 682. Omega-N-methylarginine is present on arginine 684. Serine 687 carries the post-translational modification Phosphoserine. Residue lysine 688 forms a Glycyl lysine isopeptide (Lys-Gly) (interchain with G-Cter in ubiquitin) linkage. At serine 691 the chain carries Phosphoserine. An N6-acetyllysine; alternate modification is found at lysine 704. Lysine 704 participates in a covalent cross-link: Glycyl lysine isopeptide (Lys-Gly) (interchain with G-Cter in ubiquitin); alternate. A Glycyl lysine isopeptide (Lys-Gly) (interchain with G-Cter in ubiquitin) cross-link involves residue lysine 710. Lysine 720 carries the N6-acetyllysine; alternate modification. Lysine 720 participates in a covalent cross-link: Glycyl lysine isopeptide (Lys-Gly) (interchain with G-Cter in ubiquitin); alternate. Tyrosine 729 is modified (phosphotyrosine). Phosphoserine occurs at positions 731 and 735. The segment at 733 to 752 is disordered; sequence VVSGDTSPRHLSNVSSTGSI. A compositionally biased stretch (polar residues) spans 736–751; the sequence is GDTSPRHLSNVSSTGS. Threonine 738 is subject to Phosphothreonine. Residues serine 739, serine 744, serine 751, and serine 757 each carry the phosphoserine modification. Residue threonine 762 is modified to Phosphothreonine.

As to quaternary structure, interacts with MARK1, MARK2, MARK3 and MARK4. Interacts with SQSTM1 when polyubiquitinated. Interacts with PSMC2 through SQSTM1. Interacts with FKBP4. Binds to CSNK1D. Interacts with SGK1. Interacts with EPM2A; the interaction dephosphorylates MAPT at Ser-396. Interacts with PIN1. Interacts with LRRK2. Interacts with LRP1, leading to endocytosis; this interaction is reduced in the presence of LRPAP1/RAP. In terms of processing, polyubiquitinated. Requires functional TRAF6 and may provoke SQSTM1-dependent degradation by the proteasome. Post-translationally, phosphorylation at various serine and threonine residues in S-P or T-P motifs by proline-directed protein kinases (PDPK1, CDK1, CDK5, GSK3, MAPK) (a few sites per protein in interphase, more in mitosis), and at serine residues in K-X-G-S motifs by MAP/microtubule affinity-regulating kinase (MARK1, MARK2, MARK3 or MARK4), causing detachment from microtubules, and their disassembly. Phosphorylation at Ser-597 by BRSK1 and BRSK2 in neurons affects ability to bind microtubules and plays a role in neuron polarization. Phosphorylation at Ser-214 by SGK1 mediates microtubule depolymerization and neurite formation in hippocampal neurons. Phosphorylated by PHK. Dephosphorylation at several serine and threonine residues by the serine/threonine phosphatase PPP5C.

Its subcellular location is the cytoplasm. It localises to the cytosol. The protein resides in the cell membrane. The protein localises to the cytoskeleton. It is found in the cell projection. Its subcellular location is the axon. It localises to the dendrite. Functionally, promotes microtubule assembly and stability, and might be involved in the establishment and maintenance of neuronal polarity. The C-terminus binds axonal microtubules while the N-terminus binds neural plasma membrane components, suggesting that tau functions as a linker protein between both. Axonal polarity is predetermined by tau localization (in the neuronal cell) in the domain of the cell body defined by the centrosome. The short isoforms allow plasticity of the cytoskeleton whereas the longer isoforms may preferentially play a role in its stabilization. In Gorilla gorilla gorilla (Western lowland gorilla), this protein is Microtubule-associated protein tau (MAPT).